Reading from the N-terminus, the 535-residue chain is Cytochrome P450 4c3 (535 aa).

Residues Glu342 and Cys481 each contribute to the heme site.

This sequence belongs to the cytochrome P450 family. It depends on heme as a cofactor.

The protein localises to the endoplasmic reticulum membrane. It is found in the microsome membrane. Functionally, may be involved in the metabolism of insect hormones and in the breakdown of synthetic insecticides. The polypeptide is Cytochrome P450 4c3 (Cyp4c3) (Drosophila melanogaster (Fruit fly)).